Consider the following 315-residue polypeptide: Long form salivary protein D7L1 (315 aa).

A signal peptide spans 1 to 18 (MIIVAVLLSFLAHLLVQA). 2 disulfide bridges follow: Cys-37–Cys-73 and Cys-69–Cys-128. Trp-55 lines the thromboxane A2 pocket. Trp-58 serves as a coordination point for leukotriene C4. Residue Tyr-70 participates in thromboxane A2 binding. Residues Gly-152 and Lys-170 each coordinate leukotriene C4. Lys-170 is a thromboxane A2 binding site. 2 disulfides stabilise this stretch: Cys-178-Cys-211 and Cys-252-Cys-263.

The protein belongs to the PBP/GOBP family. Distal-lateral and median lobes of female salivary gland (at protein level). Not detected in male salivary gland (at protein level). Expressed in female salivary gland. Not detected in female carcass without salivary glands. Expressed in male salivary gland and other tissues.

The protein resides in the secreted. Its function is as follows. Modulates blood feeding of female mosquitoes on vertebrate species by binding and sequestering different mediators involved in the host response. Binds leukotriene C4, leukotriene D4, leukotriene E4 and stable analogs of thromboxane A2, U-46619 and carbocyclic TXA2. Binds weakly prostaglandins: PGD2, PGE2 and PGF2alpha. Does not bind leukotriene B4, biogenic amines, ADP, platelet activating phospholipid derivative PAF and arachidonic acid. Inhibits agonist-induced smooth muscle contraction. Inhibits platelet aggregation induced by low concentrations of collagen in thromboxane A2-dependent manner. The chain is Long form salivary protein D7L1 from Anopheles stephensi (Indo-Pakistan malaria mosquito).